Consider the following 461-residue polypeptide: ATP synthase subunit beta (461 aa).

Residue 151–158 (GGAGVGKT) participates in ATP binding.

This sequence belongs to the ATPase alpha/beta chains family. As to quaternary structure, F-type ATPases have 2 components, CF(1) - the catalytic core - and CF(0) - the membrane proton channel. CF(1) has five subunits: alpha(3), beta(3), gamma(1), delta(1), epsilon(1). CF(0) has three main subunits: a(1), b(2) and c(9-12). The alpha and beta chains form an alternating ring which encloses part of the gamma chain. CF(1) is attached to CF(0) by a central stalk formed by the gamma and epsilon chains, while a peripheral stalk is formed by the delta and b chains.

Its subcellular location is the cell inner membrane. The catalysed reaction is ATP + H2O + 4 H(+)(in) = ADP + phosphate + 5 H(+)(out). In terms of biological role, produces ATP from ADP in the presence of a proton gradient across the membrane. The catalytic sites are hosted primarily by the beta subunits. The polypeptide is ATP synthase subunit beta (Idiomarina loihiensis (strain ATCC BAA-735 / DSM 15497 / L2-TR)).